Reading from the N-terminus, the 361-residue chain is Phenylalanine 4-monooxygenase, chloroplastic (361 aa).

A chloroplast-targeting transit peptide spans 1 to 55; sequence MLALRQGALLLSARGGQTTHDNLQLCAGPSRRPRARWISSAPRPSTLVERHIRPQ. A disordered region spans residues 47–67; the sequence is LVERHIRPQASTASDATTSTS. Low complexity predominate over residues 56–67; the sequence is ASTASDATTSTS. Histidine 227, histidine 232, and glutamate 272 together coordinate Fe cation.

This sequence belongs to the biopterin-dependent aromatic amino acid hydroxylase family. Fe(2+) is required as a cofactor.

It is found in the plastid. Its subcellular location is the chloroplast. It catalyses the reaction (6R)-L-erythro-5,6,7,8-tetrahydrobiopterin + L-phenylalanine + O2 = (4aS,6R)-4a-hydroxy-L-erythro-5,6,7,8-tetrahydrobiopterin + L-tyrosine. Functionally, catalyzes the hydroxylation of L-phenylalanine to L-tyrosine. Can functionally complement an Escherichia coli tyrosine auxotroph. The chain is Phenylalanine 4-monooxygenase, chloroplastic from Chlamydomonas reinhardtii (Chlamydomonas smithii).